We begin with the raw amino-acid sequence, 102 residues long: Large ribosomal subunit protein mL63 (102 aa).

The protein belongs to the mitochondrion-specific ribosomal protein mL63 family. In terms of assembly, component of the mitochondrial large ribosomal subunit (mt-LSU). Mature mammalian 55S mitochondrial ribosomes consist of a small (28S) and a large (39S) subunit. The 28S small subunit contains a 12S ribosomal RNA (12S mt-rRNA) and 30 different proteins. The 39S large subunit contains a 16S rRNA (16S mt-rRNA), a copy of mitochondrial valine transfer RNA (mt-tRNA(Val)), which plays an integral structural role, and 52 different proteins.

The protein resides in the mitochondrion. The chain is Large ribosomal subunit protein mL63 (MRPL57) from Homo sapiens (Human).